A 206-amino-acid chain; its full sequence is Large ribosomal subunit protein uL4 (206 aa).

The tract at residues 43-78 (NQRQGTHDTKTRAEVRGGGRKPWRQKGTGRARAGSS) is disordered. The segment covering 47–59 (GTHDTKTRAEVRG) has biased composition (basic and acidic residues). The span at 60–71 (GGRKPWRQKGTG) shows a compositional bias: basic residues.

Belongs to the universal ribosomal protein uL4 family. In terms of assembly, part of the 50S ribosomal subunit.

Functionally, one of the primary rRNA binding proteins, this protein initially binds near the 5'-end of the 23S rRNA. It is important during the early stages of 50S assembly. It makes multiple contacts with different domains of the 23S rRNA in the assembled 50S subunit and ribosome. In terms of biological role, forms part of the polypeptide exit tunnel. This Desulforamulus reducens (strain ATCC BAA-1160 / DSM 100696 / MI-1) (Desulfotomaculum reducens) protein is Large ribosomal subunit protein uL4.